A 418-amino-acid polypeptide reads, in one-letter code: Glutamyl-tRNA reductase (418 aa).

Residues threonine 49 to arginine 52, serine 107, glutamate 112 to glutamine 114, and glutamine 118 contribute to the substrate site. Cysteine 50 (nucleophile) is an active-site residue. Glycine 187–isoleucine 192 is an NADP(+) binding site.

It belongs to the glutamyl-tRNA reductase family. Homodimer.

The catalysed reaction is (S)-4-amino-5-oxopentanoate + tRNA(Glu) + NADP(+) = L-glutamyl-tRNA(Glu) + NADPH + H(+). It participates in porphyrin-containing compound metabolism; protoporphyrin-IX biosynthesis; 5-aminolevulinate from L-glutamyl-tRNA(Glu): step 1/2. Functionally, catalyzes the NADPH-dependent reduction of glutamyl-tRNA(Glu) to glutamate 1-semialdehyde (GSA). The chain is Glutamyl-tRNA reductase from Aeromonas salmonicida (strain A449).